Reading from the N-terminus, the 388-residue chain is Phosphopentomutase (388 aa).

6 residues coordinate Mn(2+): aspartate 11, aspartate 283, histidine 288, aspartate 324, histidine 325, and histidine 336.

The protein belongs to the phosphopentomutase family. Mn(2+) is required as a cofactor.

Its subcellular location is the cytoplasm. It carries out the reaction 2-deoxy-alpha-D-ribose 1-phosphate = 2-deoxy-D-ribose 5-phosphate. It catalyses the reaction alpha-D-ribose 1-phosphate = D-ribose 5-phosphate. Its pathway is carbohydrate degradation; 2-deoxy-D-ribose 1-phosphate degradation; D-glyceraldehyde 3-phosphate and acetaldehyde from 2-deoxy-alpha-D-ribose 1-phosphate: step 1/2. Functionally, isomerase that catalyzes the conversion of deoxy-ribose 1-phosphate (dRib-1-P) and ribose 1-phosphate (Rib-1-P) to deoxy-ribose 5-phosphate (dRib-5-P) and ribose 5-phosphate (Rib-5-P), respectively. This is Phosphopentomutase from Anaeromyxobacter dehalogenans (strain 2CP-1 / ATCC BAA-258).